A 194-amino-acid chain; its full sequence is Crossover junction endodeoxyribonuclease RuvC (194 aa).

Active-site residues include Asp-8, Glu-72, and Asp-144. Mg(2+) contacts are provided by Asp-8, Glu-72, and Asp-144.

The protein belongs to the RuvC family. As to quaternary structure, homodimer which binds Holliday junction (HJ) DNA. The HJ becomes 2-fold symmetrical on binding to RuvC with unstacked arms; it has a different conformation from HJ DNA in complex with RuvA. In the full resolvosome a probable DNA-RuvA(4)-RuvB(12)-RuvC(2) complex forms which resolves the HJ. It depends on Mg(2+) as a cofactor.

It localises to the cytoplasm. It carries out the reaction Endonucleolytic cleavage at a junction such as a reciprocal single-stranded crossover between two homologous DNA duplexes (Holliday junction).. Its function is as follows. The RuvA-RuvB-RuvC complex processes Holliday junction (HJ) DNA during genetic recombination and DNA repair. Endonuclease that resolves HJ intermediates. Cleaves cruciform DNA by making single-stranded nicks across the HJ at symmetrical positions within the homologous arms, yielding a 5'-phosphate and a 3'-hydroxyl group; requires a central core of homology in the junction. The consensus cleavage sequence is 5'-(A/T)TT(C/G)-3'. Cleavage occurs on the 3'-side of the TT dinucleotide at the point of strand exchange. HJ branch migration catalyzed by RuvA-RuvB allows RuvC to scan DNA until it finds its consensus sequence, where it cleaves and resolves the cruciform DNA. This Psychrobacter sp. (strain PRwf-1) protein is Crossover junction endodeoxyribonuclease RuvC.